The primary structure comprises 442 residues: DNA topoisomerase 6 subunit A3 (442 aa).

A disordered region spans residues 1-34 (MSEKKRRGGAGAGAASGSASKKPRVSTAASYAES). The region spanning 91-224 (QDSASVTSRI…LHVVASEKGV (134 aa)) is the Topo IIA-type catalytic domain. Tyr-185 acts as the O-(5'-phospho-DNA)-tyrosine intermediate in catalysis. The Mg(2+) site is built by Glu-271 and Asp-323.

It belongs to the TOP6A family. In terms of assembly, homodimer. Heterotetramer of two TOP6A and two TOP6B subunits. Interacts with TOP6B. The cofactor is Mg(2+). Highly expressed in flowers before pollination. Expressed in roots and shoots.

It localises to the nucleus. It catalyses the reaction ATP-dependent breakage, passage and rejoining of double-stranded DNA.. Component of the DNA topoisomerase VI involved in chromatin organization and progression of endoreduplication cycles. Relaxes both positive and negative superturns and exhibits a strong decatenase activity. May be involved in cell proliferation and stress tolerance. This chain is DNA topoisomerase 6 subunit A3, found in Oryza sativa subsp. indica (Rice).